The primary structure comprises 432 residues: Glutamate-1-semialdehyde 2,1-aminomutase (432 aa).

At lysine 269 the chain carries N6-(pyridoxal phosphate)lysine.

This sequence belongs to the class-III pyridoxal-phosphate-dependent aminotransferase family. HemL subfamily. In terms of assembly, homodimer. Requires pyridoxal 5'-phosphate as cofactor.

The protein resides in the cytoplasm. It catalyses the reaction (S)-4-amino-5-oxopentanoate = 5-aminolevulinate. Its pathway is porphyrin-containing compound metabolism; protoporphyrin-IX biosynthesis; 5-aminolevulinate from L-glutamyl-tRNA(Glu): step 2/2. This chain is Glutamate-1-semialdehyde 2,1-aminomutase, found in Desulforamulus reducens (strain ATCC BAA-1160 / DSM 100696 / MI-1) (Desulfotomaculum reducens).